Here is a 215-residue protein sequence, read N- to C-terminus: MTLRSKILVNKNVLPTAEQALPGRETPMALPETHFVNGNPLLGPFSSNVEFAIFGLGCFWGAERRLWQQEGVVSTVVGYAGGFTPNPTYEEVCSGLTAHTEVVLVVYEPEKISYKSLLKVFWEAHNPTQGMRQGNDIGTQYRSVIYCTTPKQLDAAKASAAEFQAELRKAGLGAITTEIEEAPTVYFAEAYHQQYLAKNPQGYCGLGGTGVCLPA.

Cysteine 58 is an active-site residue.

This sequence belongs to the MsrA Met sulfoxide reductase family.

The catalysed reaction is L-methionyl-[protein] + [thioredoxin]-disulfide + H2O = L-methionyl-(S)-S-oxide-[protein] + [thioredoxin]-dithiol. The enzyme catalyses [thioredoxin]-disulfide + L-methionine + H2O = L-methionine (S)-S-oxide + [thioredoxin]-dithiol. Its function is as follows. Has an important function as a repair enzyme for proteins that have been inactivated by oxidation. Catalyzes the reversible oxidation-reduction of methionine sulfoxide in proteins to methionine. In Pseudomonas savastanoi pv. phaseolicola (strain 1448A / Race 6) (Pseudomonas syringae pv. phaseolicola (strain 1448A / Race 6)), this protein is Peptide methionine sulfoxide reductase MsrA.